Consider the following 395-residue polypeptide: Elongation factor Tu (395 aa).

Residues 10 to 204 (KPHVNIGTIG…NVDEYIPLPQ (195 aa)) enclose the tr-type G domain. The G1 stretch occupies residues 19–26 (GHVDHGKT). A GTP-binding site is contributed by 19 to 26 (GHVDHGKT). Residue T26 coordinates Mg(2+). Residues 60–64 (GITIN) are G2. The tract at residues 81–84 (DCPG) is G3. Residues 81–85 (DCPGH) and 136–139 (NKVD) each bind GTP. The tract at residues 136–139 (NKVD) is G4. The interval 174–176 (SAL) is G5.

The protein belongs to the TRAFAC class translation factor GTPase superfamily. Classic translation factor GTPase family. EF-Tu/EF-1A subfamily. As to quaternary structure, monomer.

Its subcellular location is the cytoplasm. The enzyme catalyses GTP + H2O = GDP + phosphate + H(+). Its function is as follows. GTP hydrolase that promotes the GTP-dependent binding of aminoacyl-tRNA to the A-site of ribosomes during protein biosynthesis. The protein is Elongation factor Tu of Amoebophilus asiaticus (strain 5a2).